A 433-amino-acid polypeptide reads, in one-letter code: Dihydroorotase (433 aa).

His63 and His65 together coordinate Zn(2+). Substrate-binding positions include 65-67 (HLR) and Asn97. Zn(2+) is bound by residues Asp155, His182, and His235. Asn283 contributes to the substrate binding site. Asp310 serves as a coordination point for Zn(2+). Asp310 is a catalytic residue. His314 is a substrate binding site.

It belongs to the metallo-dependent hydrolases superfamily. DHOase family. Class I DHOase subfamily. Zn(2+) serves as cofactor.

The catalysed reaction is (S)-dihydroorotate + H2O = N-carbamoyl-L-aspartate + H(+). Its pathway is pyrimidine metabolism; UMP biosynthesis via de novo pathway; (S)-dihydroorotate from bicarbonate: step 3/3. Its function is as follows. Catalyzes the reversible cyclization of carbamoyl aspartate to dihydroorotate. The chain is Dihydroorotase from Anaeromyxobacter sp. (strain K).